A 102-amino-acid polypeptide reads, in one-letter code: Small ribosomal subunit protein uS10 (102 aa).

Belongs to the universal ribosomal protein uS10 family. Part of the 30S ribosomal subunit.

Involved in the binding of tRNA to the ribosomes. This is Small ribosomal subunit protein uS10 from Sulfurihydrogenibium sp. (strain YO3AOP1).